The sequence spans 297 residues: 4-diphosphocytidyl-2-C-methyl-D-erythritol kinase (297 aa).

Lys-10 is a catalytic residue. Residue 95–105 (PVAGGMAGGSA) participates in ATP binding. Residue Asp-137 is part of the active site.

The protein belongs to the GHMP kinase family. IspE subfamily.

The enzyme catalyses 4-CDP-2-C-methyl-D-erythritol + ATP = 4-CDP-2-C-methyl-D-erythritol 2-phosphate + ADP + H(+). It participates in isoprenoid biosynthesis; isopentenyl diphosphate biosynthesis via DXP pathway; isopentenyl diphosphate from 1-deoxy-D-xylulose 5-phosphate: step 3/6. Functionally, catalyzes the phosphorylation of the position 2 hydroxy group of 4-diphosphocytidyl-2C-methyl-D-erythritol. The protein is 4-diphosphocytidyl-2-C-methyl-D-erythritol kinase of Streptomyces avermitilis (strain ATCC 31267 / DSM 46492 / JCM 5070 / NBRC 14893 / NCIMB 12804 / NRRL 8165 / MA-4680).